Reading from the N-terminus, the 427-residue chain is Glutamate-1-semialdehyde 2,1-aminomutase (427 aa).

Position 267 is an N6-(pyridoxal phosphate)lysine (lysine 267).

This sequence belongs to the class-III pyridoxal-phosphate-dependent aminotransferase family. HemL subfamily. As to quaternary structure, homodimer. The cofactor is pyridoxal 5'-phosphate.

The protein resides in the cytoplasm. The enzyme catalyses (S)-4-amino-5-oxopentanoate = 5-aminolevulinate. It participates in porphyrin-containing compound metabolism; protoporphyrin-IX biosynthesis; 5-aminolevulinate from L-glutamyl-tRNA(Glu): step 2/2. This chain is Glutamate-1-semialdehyde 2,1-aminomutase, found in Geobacter metallireducens (strain ATCC 53774 / DSM 7210 / GS-15).